A 625-amino-acid polypeptide reads, in one-letter code: Dual specificity protein phosphatase 8 (625 aa).

In terms of domain architecture, Rhodanese spans 23–138 (GPGGPLVIDS…FSSCFPGLCE (116 aa)). One can recognise a Tyrosine-protein phosphatase domain in the interval 160–302 (GLTRILPHLY…LLEYERSLKL (143 aa)). C246 (phosphocysteine intermediate) is an active-site residue. Residues 306 to 586 (LQGDPGTPSG…PAPETQFKRR (281 aa)) form a disordered region. A compositionally biased stretch (basic and acidic residues) spans 380 to 389 (SSDRLQDTNR). The segment covering 431–448 (AALGLSSPSPDSPDAAPE) has biased composition (low complexity). Residues 555–570 (DLRRREAARAEPRDAR) show a composition bias toward basic and acidic residues.

It belongs to the protein-tyrosine phosphatase family. Non-receptor class dual specificity subfamily. In terms of assembly, monomer. Abundant in brain, heart and skeletal muscle.

It localises to the cytoplasm. Its subcellular location is the nucleus. The enzyme catalyses O-phospho-L-tyrosyl-[protein] + H2O = L-tyrosyl-[protein] + phosphate. The catalysed reaction is O-phospho-L-seryl-[protein] + H2O = L-seryl-[protein] + phosphate. It carries out the reaction O-phospho-L-threonyl-[protein] + H2O = L-threonyl-[protein] + phosphate. Functionally, has phosphatase activity with synthetic phosphatase substrates and negatively regulates mitogen-activated protein kinase activity, presumably by catalysing their dephosphorylation. Expected to display protein phosphatase activity toward phosphotyrosine, phosphoserine and phosphothreonine residues. The protein is Dual specificity protein phosphatase 8 (DUSP8) of Homo sapiens (Human).